A 507-amino-acid chain; its full sequence is Probable cyclic di-GMP phosphodiesterase PdeG (507 aa).

Helical transmembrane passes span 4-24 (TLIP…ILNI) and 217-237 (LIDK…AAAF). Residues 246–500 (SATPEEILRR…DLVKIILSKP (255 aa)) form the EAL domain.

The protein resides in the cell membrane. The catalysed reaction is 3',3'-c-di-GMP + H2O = 5'-phosphoguanylyl(3'-&gt;5')guanosine + H(+). Phosphodiesterase (PDE) that catalyzes the hydrolysis of cyclic-di-GMP (c-di-GMP) to 5'-pGpG. In Escherichia coli (strain K12), this protein is Probable cyclic di-GMP phosphodiesterase PdeG.